A 318-amino-acid polypeptide reads, in one-letter code: L-lactate dehydrogenase (318 aa).

Residues Val-18, Asp-39, Lys-44, Tyr-69, and Gly-83–Ala-84 contribute to the NAD(+) site. 2 residues coordinate substrate: Gln-86 and Arg-92. NAD(+)-binding positions include Ser-105, Val-122–Asn-124, and Ser-147. Asn-124 to Asp-127 contributes to the substrate binding site. A substrate-binding site is contributed by Asp-152–Arg-155. The Proton acceptor role is filled by His-179. Tyr-225 is subject to Phosphotyrosine. Position 234 (Thr-234) interacts with substrate.

It belongs to the LDH/MDH superfamily. LDH family. Homotetramer.

It is found in the cytoplasm. It catalyses the reaction (S)-lactate + NAD(+) = pyruvate + NADH + H(+). Its pathway is fermentation; pyruvate fermentation to lactate; (S)-lactate from pyruvate: step 1/1. Functionally, catalyzes the conversion of lactate to pyruvate. This is L-lactate dehydrogenase from Clostridium botulinum (strain Okra / Type B1).